A 607-amino-acid polypeptide reads, in one-letter code: DNA mismatch repair protein MutL (607 aa).

This sequence belongs to the DNA mismatch repair MutL/HexB family.

In terms of biological role, this protein is involved in the repair of mismatches in DNA. It is required for dam-dependent methyl-directed DNA mismatch repair. May act as a 'molecular matchmaker', a protein that promotes the formation of a stable complex between two or more DNA-binding proteins in an ATP-dependent manner without itself being part of a final effector complex. This Gemmatimonas aurantiaca (strain DSM 14586 / JCM 11422 / NBRC 100505 / T-27) protein is DNA mismatch repair protein MutL.